The primary structure comprises 383 residues: Outer membrane protein assembly factor BamB (383 aa).

The signal sequence occupies residues 1–23 (MMLLKRCNRRALVALAAVLLLAA). Cysteine 24 carries the N-palmitoyl cysteine lipid modification. Cysteine 24 carries S-diacylglycerol cysteine lipidation.

Belongs to the BamB family. In terms of assembly, part of the Bam complex.

It is found in the cell outer membrane. Its function is as follows. Part of the outer membrane protein assembly complex, which is involved in assembly and insertion of beta-barrel proteins into the outer membrane. This chain is Outer membrane protein assembly factor BamB, found in Alkalilimnicola ehrlichii (strain ATCC BAA-1101 / DSM 17681 / MLHE-1).